The following is a 339-amino-acid chain: Alpha-ketoglutarate-dependent dioxygenase btcD (339 aa).

Substrate is bound at residue histidine 96. Residues histidine 140 and aspartate 142 each coordinate Fe cation. Position 173 (threonine 173) interacts with 2-oxoglutarate. Positions 207–230 (DGSDPKFQVPRGSPANVGTNLRPT) are disordered. Histidine 302 contributes to the Fe cation binding site. 2-oxoglutarate is bound by residues arginine 314 and arginine 318. Arginine 318 serves as a coordination point for substrate.

The protein belongs to the TfdA dioxygenase family. The cofactor is Fe(2+).

It functions in the pathway secondary metabolite biosynthesis; terpenoid biosynthesis. Functionally, alpha-ketoglutarate-dependent dioxygenase; part of the gene cluster that mediates the biosynthesis of betaestacins. The bifunctional terpene synthase btcA converts isopentenyl diphosphate (IPP) and dimethylallyl diphosphate (DMAPP) into the sesterterpene betaestacin I. The C-terminal prenyltransferase (PT) domain of btcA catalyzes formation of GFPP, whereas the N-terminal terpene cyclase (TC) domain catalyzes the cyclization of GFPP into betaestacin I. The cytochrome P450 monooxygenase btcB is then responsible for the six-step oxidation of betaestacin I to yield betaestacin II. The roles of the cytochrome P450 monooxygenase btcC and the alpha-ketoglutarate-dependent dioxygenase btcD have not been identified yet. In Neocamarosporium betae (Beet black rot fungus), this protein is Alpha-ketoglutarate-dependent dioxygenase btcD.